Consider the following 598-residue polypeptide: Elongation factor 4 (598 aa).

The tr-type G domain maps to lysine 4–lysine 185. Residues aspartate 16 to threonine 21 and asparagine 132 to aspartate 135 contribute to the GTP site.

The protein belongs to the TRAFAC class translation factor GTPase superfamily. Classic translation factor GTPase family. LepA subfamily.

Its subcellular location is the cell inner membrane. It carries out the reaction GTP + H2O = GDP + phosphate + H(+). Its function is as follows. Required for accurate and efficient protein synthesis under certain stress conditions. May act as a fidelity factor of the translation reaction, by catalyzing a one-codon backward translocation of tRNAs on improperly translocated ribosomes. Back-translocation proceeds from a post-translocation (POST) complex to a pre-translocation (PRE) complex, thus giving elongation factor G a second chance to translocate the tRNAs correctly. Binds to ribosomes in a GTP-dependent manner. The polypeptide is Elongation factor 4 (Campylobacter jejuni subsp. jejuni serotype O:2 (strain ATCC 700819 / NCTC 11168)).